Here is a 511-residue protein sequence, read N- to C-terminus: Peroxisomal N(1)-acetyl-spermine/spermidine oxidase (511 aa).

The residue at position 1 (Met-1) is an N-acetylmethionine. FAD is bound by residues Ala-24, Glu-45, Arg-53, and 69–70 (HW). Positions 72 and 194 each coordinate substrate. Val-247 lines the FAD pocket. Residue Asn-320 participates in substrate binding. Residues Glu-472 and 481 to 482 (TT) contribute to the FAD site. The Microbody targeting signal signature appears at 509–511 (PRL).

It belongs to the flavin monoamine oxidase family. As to quaternary structure, monomer. It depends on FAD as a cofactor. In terms of tissue distribution, widely expressed. Not detected in spleen. Expressed at lower level in neoplastic tissues.

The protein resides in the peroxisome. It is found in the cytoplasm. The enzyme catalyses N(1)-acetylspermine + O2 + H2O = 3-acetamidopropanal + spermidine + H2O2. The catalysed reaction is N(1)-acetylspermidine + O2 + H2O = 3-acetamidopropanal + putrescine + H2O2. It catalyses the reaction N(1),N(12)-diacetylspermine + O2 + H2O = 3-acetamidopropanal + N(1)-acetylspermidine + H2O2. It participates in amine and polyamine metabolism; spermine metabolism. In terms of biological role, flavoenzyme which catalyzes the oxidation of N(1)-acetylspermine to spermidine and is thus involved in the polyamine back-conversion. Can also oxidize N(1)-acetylspermidine to putrescine. Substrate specificity: N(1)-acetylspermine = N(1)-acetylspermidine &gt; N(1),N(12)-diacylspermine &gt;&gt; spermine. Does not oxidize spermidine. Plays an important role in the regulation of polyamine intracellular concentration and has the potential to act as a determinant of cellular sensitivity to the antitumor polyamine analogs. The protein is Peroxisomal N(1)-acetyl-spermine/spermidine oxidase (PAOX) of Homo sapiens (Human).